The following is a 97-amino-acid chain: Small ribosomal subunit protein bS18c (97 aa).

Belongs to the bacterial ribosomal protein bS18 family. Part of the 30S ribosomal subunit.

The protein resides in the plastid. Its subcellular location is the chloroplast. This is Small ribosomal subunit protein bS18c from Oenothera glazioviana (Large-flowered evening primrose).